A 181-amino-acid polypeptide reads, in one-letter code: Putative adenylate kinase (181 aa).

5 residues coordinate ATP: G10, G12, K13, S14, and T15. The interval 35 to 58 is NMP; that stretch reads NITEVVSKNGLYLEKDIEMDSYVV. An LID region spans residues 106–116; it reads SRNYSSEKVKE. The ATP site is built by R107 and K147.

Belongs to the adenylate kinase family. AK6 subfamily. In terms of assembly, interacts with uS11. Not a structural component of 40S pre-ribosomes, but transiently interacts with them by binding to uS11.

It carries out the reaction AMP + ATP = 2 ADP. The enzyme catalyses ATP + H2O = ADP + phosphate + H(+). In terms of biological role, broad-specificity nucleoside monophosphate (NMP) kinase that catalyzes the reversible transfer of the terminal phosphate group between nucleoside triphosphates and monophosphates. Also has ATPase activity. Involved in the late maturation steps of the 30S ribosomal particles, specifically 16S rRNA maturation. While NMP activity is not required for ribosome maturation, ATPase activity is. Associates transiently with small ribosomal subunit protein uS11. ATP hydrolysis breaks the interaction with uS11. May temporarily remove uS11 from the ribosome to enable a conformational change of the ribosomal RNA that is needed for the final maturation step of the small ribosomal subunit. This is Putative adenylate kinase from Methanococcus maripaludis (strain C7 / ATCC BAA-1331).